Consider the following 948-residue polypeptide: Sensor histidine kinase RcsC (948 aa).

Residues 1-20 (MKYLASFRTTLKVSRYLFRA) lie on the Cytoplasmic side of the membrane. Residues 21–41 (LALLIWLLIAFVSVFYIVNAL) form a helical membrane-spanning segment. Residues 42 to 313 (HQRESEIRQE…PVDLVLERIR (272 aa)) are Periplasmic-facing. Residues 314–334 (ILILNAILLNVLVGAGLFTLA) form a helical membrane-spanning segment. Over 335 to 948 (RMYERRIFIP…YAERVRKTRA (614 aa)) the chain is Cytoplasmic. Residues 357-425 (QFNRKIVASA…VLTSNNTNLQ (69 aa)) enclose the PAS domain. The 217-residue stretch at 476 to 692 (TVSHELRTPL…QFTLRIPLYG (217 aa)) folds into the Histidine kinase domain. The residue at position 479 (H479) is a Phosphohistidine; by autocatalysis. Positions 705 to 805 (AGTCCWLAVR…ARIYSIELDS (101 aa)) constitute an ABL domain. The Response regulatory domain occupies 826 to 940 (MILVVDDHPI…ALKQTLAVYA (115 aa)). Residue D875 is modified to 4-aspartylphosphate.

This sequence belongs to the RcsC family. In terms of assembly, interacts with RcsD. Post-translationally, autophosphorylated. Activation probably requires a transfer of a phosphate group from a His in the transmitter domain to an Asp in the receiver domain.

Its subcellular location is the cell inner membrane. It carries out the reaction ATP + protein L-histidine = ADP + protein N-phospho-L-histidine.. In terms of biological role, component of the Rcs signaling system, which controls transcription of numerous genes. RcsC functions as a membrane-associated protein kinase that phosphorylates RcsD in response to environmental signals. The phosphoryl group is then transferred to the response regulator RcsB. The chain is Sensor histidine kinase RcsC from Salmonella typhi.